Here is a 317-residue protein sequence, read N- to C-terminus: Tyrosine--tRNA ligase (317 aa).

Y33 lines the L-tyrosine pocket. A 'HIGH' region motif is present at residues 38–46 (PSGKIHMGH). 4 residues coordinate L-tyrosine: Y155, Q159, D162, and Q177. Positions 211-215 (KMASS) match the 'KMSKS' region motif. S214 is a binding site for ATP.

It belongs to the class-I aminoacyl-tRNA synthetase family. TyrS type 3 subfamily. Homodimer.

The protein resides in the cytoplasm. The enzyme catalyses tRNA(Tyr) + L-tyrosine + ATP = L-tyrosyl-tRNA(Tyr) + AMP + diphosphate + H(+). In terms of biological role, catalyzes the attachment of tyrosine to tRNA(Tyr) in a two-step reaction: tyrosine is first activated by ATP to form Tyr-AMP and then transferred to the acceptor end of tRNA(Tyr). This is Tyrosine--tRNA ligase from Methanosarcina acetivorans (strain ATCC 35395 / DSM 2834 / JCM 12185 / C2A).